Consider the following 127-residue polypeptide: Large ribosomal subunit protein bL20 (127 aa).

It belongs to the bacterial ribosomal protein bL20 family.

Functionally, binds directly to 23S ribosomal RNA and is necessary for the in vitro assembly process of the 50S ribosomal subunit. It is not involved in the protein synthesizing functions of that subunit. This chain is Large ribosomal subunit protein bL20, found in Bifidobacterium longum (strain DJO10A).